An 879-amino-acid chain; its full sequence is Alanine--tRNA ligase (879 aa).

4 residues coordinate Zn(2+): His567, His571, Cys669, and His673.

It belongs to the class-II aminoacyl-tRNA synthetase family. Requires Zn(2+) as cofactor.

It is found in the cytoplasm. The catalysed reaction is tRNA(Ala) + L-alanine + ATP = L-alanyl-tRNA(Ala) + AMP + diphosphate. Functionally, catalyzes the attachment of alanine to tRNA(Ala) in a two-step reaction: alanine is first activated by ATP to form Ala-AMP and then transferred to the acceptor end of tRNA(Ala). Also edits incorrectly charged Ser-tRNA(Ala) and Gly-tRNA(Ala) via its editing domain. The sequence is that of Alanine--tRNA ligase from Levilactobacillus brevis (strain ATCC 367 / BCRC 12310 / CIP 105137 / JCM 1170 / LMG 11437 / NCIMB 947 / NCTC 947) (Lactobacillus brevis).